The sequence spans 154 residues: MNIIEGSFEAKGKKFAIVVSRFNHFIVDSLLDGAVDALKRHGNVNDEDITIVRVPGAYELPLAAKKIAKKGEADAIIAIGAVIRGGTPHFDFVAGESNKGLAQVCLESEIPVSFGVITTDSIEQAIERAGTKAGNKGAEAALGALEMVNVLAQI.

Residues Phe-22, 57-59, and 81-83 each bind 5-amino-6-(D-ribitylamino)uracil; these read AYE and AVI. Residue 86–87 coordinates (2S)-2-hydroxy-3-oxobutyl phosphate; sequence GT. The Proton donor role is filled by His-89. A 5-amino-6-(D-ribitylamino)uracil-binding site is contributed by Phe-114. Arg-128 is a (2S)-2-hydroxy-3-oxobutyl phosphate binding site.

The protein belongs to the DMRL synthase family. As to quaternary structure, forms an icosahedral capsid composed of 60 subunits, arranged as a dodecamer of pentamers.

It carries out the reaction (2S)-2-hydroxy-3-oxobutyl phosphate + 5-amino-6-(D-ribitylamino)uracil = 6,7-dimethyl-8-(1-D-ribityl)lumazine + phosphate + 2 H2O + H(+). Its pathway is cofactor biosynthesis; riboflavin biosynthesis; riboflavin from 2-hydroxy-3-oxobutyl phosphate and 5-amino-6-(D-ribitylamino)uracil: step 1/2. Catalyzes the formation of 6,7-dimethyl-8-ribityllumazine by condensation of 5-amino-6-(D-ribitylamino)uracil with 3,4-dihydroxy-2-butanone 4-phosphate. This is the penultimate step in the biosynthesis of riboflavin. In Colwellia psychrerythraea (strain 34H / ATCC BAA-681) (Vibrio psychroerythus), this protein is 6,7-dimethyl-8-ribityllumazine synthase.